The chain runs to 174 residues: 2-C-methyl-D-erythritol 2,4-cyclodiphosphate synthase (174 aa).

Residues Asp-13, His-15, and His-61 each contribute to the a divalent metal cation site. A 4-CDP-2-C-methyl-D-erythritol 2-phosphate-binding site is contributed by 13–15 (DAH). Residues 75–77 (DIG), 149–152 (TTTD), Phe-156, and His-159 contribute to the 4-CDP-2-C-methyl-D-erythritol 2-phosphate site.

This sequence belongs to the IspF family. As to quaternary structure, homotrimer. A divalent metal cation serves as cofactor.

It catalyses the reaction 4-CDP-2-C-methyl-D-erythritol 2-phosphate = 2-C-methyl-D-erythritol 2,4-cyclic diphosphate + CMP. It participates in isoprenoid biosynthesis; isopentenyl diphosphate biosynthesis via DXP pathway; isopentenyl diphosphate from 1-deoxy-D-xylulose 5-phosphate: step 4/6. Functionally, involved in the biosynthesis of isopentenyl diphosphate (IPP) and dimethylallyl diphosphate (DMAPP), two major building blocks of isoprenoid compounds. Catalyzes the conversion of 4-diphosphocytidyl-2-C-methyl-D-erythritol 2-phosphate (CDP-ME2P) to 2-C-methyl-D-erythritol 2,4-cyclodiphosphate (ME-CPP) with a corresponding release of cytidine 5-monophosphate (CMP). The chain is 2-C-methyl-D-erythritol 2,4-cyclodiphosphate synthase from Bifidobacterium longum (strain NCC 2705).